Consider the following 753-residue polypeptide: Probable tubulin--tyrosine ligase PBY1 (753 aa).

In terms of domain architecture, TTL spans 343–734 (MEYIYKPLTH…PIFNENRNKT (392 aa)).

The protein belongs to the tubulin--tyrosine ligase family. Mg(2+) is required as a cofactor. The cofactor is K(+).

The protein resides in the cytoplasm. It localises to the P-body. It carries out the reaction C-terminal L-alpha-aminoacyl-L-glutamyl-L-glutamyl-[tubulin] + L-tyrosine + ATP = C-terminal L-alpha-aminoacyl-L-glutamyl-L-glutamyl-L-tyrosyl-[tubulin] + ADP + phosphate + H(+). Functionally, probable P-body-associated tubulin--tyrosine ligase. This Saccharomyces cerevisiae (strain ATCC 204508 / S288c) (Baker's yeast) protein is Probable tubulin--tyrosine ligase PBY1 (PBY1).